Reading from the N-terminus, the 193-residue chain is 3-isopropylmalate dehydratase small subunit (193 aa).

It belongs to the LeuD family. LeuD type 1 subfamily. As to quaternary structure, heterodimer of LeuC and LeuD.

The catalysed reaction is (2R,3S)-3-isopropylmalate = (2S)-2-isopropylmalate. It participates in amino-acid biosynthesis; L-leucine biosynthesis; L-leucine from 3-methyl-2-oxobutanoate: step 2/4. In terms of biological role, catalyzes the isomerization between 2-isopropylmalate and 3-isopropylmalate, via the formation of 2-isopropylmaleate. This is 3-isopropylmalate dehydratase small subunit from Bacillus thuringiensis subsp. konkukian (strain 97-27).